Reading from the N-terminus, the 648-residue chain is Beta-glucuronidase (648 aa).

The signal sequence occupies residues 1-22 (MSLKWSACWVALGQLLCSCALA). N-linked (GlcNAc...) asparagine glycosylation is found at Asn-172 and Asn-416. The active-site Proton donor is Glu-447. N-linked (GlcNAc...) asparagine glycosylation is present at Asn-627.

Belongs to the glycosyl hydrolase 2 family. As to quaternary structure, homotetramer.

The protein localises to the lysosome. It localises to the endoplasmic reticulum. The catalysed reaction is a beta-D-glucuronoside + H2O = D-glucuronate + an alcohol. Its activity is regulated as follows. Inhibited by L-aspartic acid. Plays an important role in the degradation of dermatan and keratan sulfates. The polypeptide is Beta-glucuronidase (Gusb) (Mus musculus (Mouse)).